Consider the following 386-residue polypeptide: Succinate--CoA ligase [ADP-forming] subunit beta (386 aa).

In terms of domain architecture, ATP-grasp spans 9–244; sequence KDLLTAYQLP…PSQENIRDVL (236 aa). ATP is bound by residues lysine 46, 53-55, valine 102, and glutamate 107; that span reads GRG. 2 residues coordinate Mg(2+): asparagine 199 and aspartate 213. Substrate contacts are provided by residues asparagine 264 and 321–323; that span reads GIM.

The protein belongs to the succinate/malate CoA ligase beta subunit family. As to quaternary structure, heterotetramer of two alpha and two beta subunits. Requires Mg(2+) as cofactor.

It catalyses the reaction succinate + ATP + CoA = succinyl-CoA + ADP + phosphate. The enzyme catalyses GTP + succinate + CoA = succinyl-CoA + GDP + phosphate. Its pathway is carbohydrate metabolism; tricarboxylic acid cycle; succinate from succinyl-CoA (ligase route): step 1/1. In terms of biological role, succinyl-CoA synthetase functions in the citric acid cycle (TCA), coupling the hydrolysis of succinyl-CoA to the synthesis of either ATP or GTP and thus represents the only step of substrate-level phosphorylation in the TCA. The beta subunit provides nucleotide specificity of the enzyme and binds the substrate succinate, while the binding sites for coenzyme A and phosphate are found in the alpha subunit. The chain is Succinate--CoA ligase [ADP-forming] subunit beta from Chlamydia trachomatis serovar A (strain ATCC VR-571B / DSM 19440 / HAR-13).